We begin with the raw amino-acid sequence, 320 residues long: Cytochrome f (320 aa).

A signal peptide spans 1–35 (MQTRNAFSWIKKEITRSISVLLMIYIITRAPISNA). Residues Tyr36, Cys56, Cys59, and His60 each coordinate heme. The chain crosses the membrane as a helical span at residues 286–305 (VQGLLLFLASIILAQILLVL).

This sequence belongs to the cytochrome f family. The 4 large subunits of the cytochrome b6-f complex are cytochrome b6, subunit IV (17 kDa polypeptide, petD), cytochrome f and the Rieske protein, while the 4 small subunits are PetG, PetL, PetM and PetN. The complex functions as a dimer. Requires heme as cofactor.

Its subcellular location is the plastid. The protein resides in the chloroplast thylakoid membrane. Functionally, component of the cytochrome b6-f complex, which mediates electron transfer between photosystem II (PSII) and photosystem I (PSI), cyclic electron flow around PSI, and state transitions. In Pisum sativum (Garden pea), this protein is Cytochrome f (petA).